We begin with the raw amino-acid sequence, 1017 residues long: Protein HIRA (1017 aa).

2 WD repeats span residues 11–53 (HNGK…QEDD) and 68–107 (NHLA…GPST). Phosphoserine is present on S111. 5 WD repeats span residues 129–168 (NHSG…EILA), 172–211 (GHSG…LETS), 220–263 (GGTT…TNMD), 266–322 (GHRK…PLVV), and 326–367 (LFDK…DPLS). An interaction with ASF1A region spans residues 421-479 (REMGSATSVAGVVNGESLEDIRKNLLKKQVETRTADGRRRITPLCIAQLDTGDFSTAFF). An interaction with CCNA1 region spans residues 421 to 729 (REMGSATSVA…RLKCNREGKE (309 aa)). The segment at 439 to 475 (EDIRKNLLKKQVETRTADGRRRITPLCIAQLDTGDFS) is required for repression of histone gene transcription. The segment covering 494–509 (SSHSSPQLLPLDSSTP) has biased composition (low complexity). A disordered region spans residues 494–555 (SSHSSPQLLP…AALSPSVLTT (62 aa)). Polar residues predominate over residues 536–555 (KDSMNATSTPAALSPSVLTT). A Phosphoserine modification is found at S549. Phosphothreonine; by CDK2 is present on T555. Position 557 is a phosphoserine (S557). Disordered stretches follow at residues 570-589 (TERS…TPTA) and 604-625 (PRDL…KASS). T576 carries the post-translational modification Phosphothreonine. S584 is modified (phosphoserine). The residue at position 586 (T586) is a Phosphothreonine. The segment at 593 to 826 (LKEQNLVKEL…LAGSDMTVSQ (234 aa)) is interaction with histone H2B. 2 interaction with PAX3 regions span residues 594–739 (KEQN…SRIL) and 740–828 (TAAG…SQIL). Basic and acidic residues predominate over residues 604 to 619 (PRDLLESSSDSDEKVP). Phosphoserine occurs at positions 610, 611, 612, 614, 661, 675, and 687. Positions 738–1017 (ILTAAGSCDV…QEQLDILRDK (280 aa)) are interaction with histone H4.

This sequence belongs to the WD repeat HIR1 family. Interacts with histone H3-3B, PAX3 and PAX7. Interacts with histone H3.Y. Interacts with CCNA1, HIRIP3, NFU1/HIRIP5 and histone H2B. Part of a complex which includes ASF1A, CABIN1, histone H3.3, histone H4 and UBN1. Sumoylated. In terms of processing, phosphorylated by CDK2/CCNA1 and CDK2/CCNE1 on Thr-555 in vitro. Also phosphorylated on Thr-555 and Ser-687 in vivo. In terms of tissue distribution, expressed at high levels in kidney, pancreas and skeletal muscle and at lower levels in brain, heart, liver, lung, and placenta.

Its subcellular location is the nucleus. It localises to the PML body. In terms of biological role, cooperates with ASF1A to promote replication-independent chromatin assembly. Required for the periodic repression of histone gene transcription during the cell cycle. Required for the formation of senescence-associated heterochromatin foci (SAHF) and efficient senescence-associated cell cycle exit. The protein is Protein HIRA (HIRA) of Homo sapiens (Human).